Here is a 317-residue protein sequence, read N- to C-terminus: Carbonic anhydrase 5B, mitochondrial (317 aa).

The N-terminal 33 residues, 1–33 (MTVMSHLRVSLQVSSCTLLWRRFRVPRLVPLRS), are a transit peptide targeting the mitochondrion. Residues 37-296 (YTCTYRTRNR…LMNRTVRSSF (260 aa)) form the Alpha-carbonic anhydrase domain. Residues H130, H132, and H155 each contribute to the Zn(2+) site. Residue 235-236 (TT) coordinates substrate.

The protein belongs to the alpha-carbonic anhydrase family. The cofactor is Zn(2+).

It localises to the mitochondrion. The enzyme catalyses hydrogencarbonate + H(+) = CO2 + H2O. Functionally, mitochondrial carbonic anhydrase that catalyzes the reversible conversion of carbon dioxide to bicarbonate/HCO3. This Rattus norvegicus (Rat) protein is Carbonic anhydrase 5B, mitochondrial (Ca5b).